Consider the following 121-residue polypeptide: Flagellar protein FliT (121 aa).

Residues 1–50 form a required for homodimerization region; it reads MNNAPHLYFAWQQLVEKSQLMLRLATEEQWDELITSEMAYVNAVQEIAHL. The tract at residues 60–98 is fliD binding; the sequence is MQEQLRPMLRLILDNESKVKQLLQIRMDELAKLVGQSSV.

Belongs to the FliT family. As to quaternary structure, homodimer. Interacts with FliD and FlhC.

Its subcellular location is the cytoplasm. The protein resides in the cytosol. Functionally, dual-function protein that regulates the transcription of class 2 flagellar operons and that also acts as an export chaperone for the filament-capping protein FliD. As a transcriptional regulator, acts as an anti-FlhDC factor; it directly binds FlhC, thus inhibiting the binding of the FlhC/FlhD complex to class 2 promoters, resulting in decreased expression of class 2 flagellar operons. As a chaperone, effects FliD transition to the membrane by preventing its premature polymerization, and by directing it to the export apparatus. The chain is Flagellar protein FliT from Escherichia coli (strain 55989 / EAEC).